The primary structure comprises 442 residues: Protein PhoH2 (442 aa).

Positions 3 to 135 (KIYVLDTNVL…LVSKDVLVRV (133 aa)) constitute a PINc domain. 259-266 (GKAGTGKT) contributes to the ATP binding site.

This sequence in the N-terminal section; belongs to the PINc/VapC protein family. It in the C-terminal section; belongs to the PhoH family.

It carries out the reaction n ATP + n H2O + wound RNA = n ADP + n phosphate + unwound RNA.. It catalyses the reaction ATP + H2O = ADP + phosphate + H(+). The catalysed reaction is GTP + H2O = GDP + phosphate + H(+). Unwinds and/or cleaves 5'-tailed RNA in vitro. Has ATPase and GTPase activities. Unlike the protein in mycobacteria there does not seem to be an antitoxin gene upstream, suggesting this is not a toxin-antitoxin system. This is Protein PhoH2 from Bacillus subtilis (strain 168).